A 110-amino-acid chain; its full sequence is Iron-sulfur cluster insertion protein ErpA (110 aa).

Residues cysteine 38, cysteine 102, and cysteine 104 each coordinate iron-sulfur cluster.

It belongs to the HesB/IscA family. Homodimer. It depends on iron-sulfur cluster as a cofactor.

Its function is as follows. Required for insertion of 4Fe-4S clusters for at least IspG. This chain is Iron-sulfur cluster insertion protein ErpA, found in Marinobacter nauticus (strain ATCC 700491 / DSM 11845 / VT8) (Marinobacter aquaeolei).